Consider the following 311-residue polypeptide: HPr kinase/phosphorylase (311 aa).

Active-site residues include His140 and Lys161. 155 to 162 is a binding site for ATP; it reads GDSGIGKS. Ser162 contacts Mg(2+). Residue Asp179 is the Proton acceptor; for phosphorylation activity. Proton donor; for dephosphorylation activity of the active site. The important for the catalytic mechanism of both phosphorylation and dephosphorylation stretch occupies residues 203–212; sequence IEIRGIGIID. Residue Glu204 coordinates Mg(2+). Arg245 is an active-site residue. The interval 266–271 is important for the catalytic mechanism of dephosphorylation; sequence PVKTGR.

The protein belongs to the HPrK/P family. In terms of assembly, homohexamer. Mg(2+) is required as a cofactor.

It carries out the reaction [HPr protein]-L-serine + ATP = [HPr protein]-O-phospho-L-serine + ADP + H(+). It catalyses the reaction [HPr protein]-O-phospho-L-serine + phosphate + H(+) = [HPr protein]-L-serine + diphosphate. Catalyzes the ATP- as well as the pyrophosphate-dependent phosphorylation of a specific serine residue in HPr, a phosphocarrier protein of the phosphoenolpyruvate-dependent sugar phosphotransferase system (PTS). HprK/P also catalyzes the pyrophosphate-producing, inorganic phosphate-dependent dephosphorylation (phosphorolysis) of seryl-phosphorylated HPr (P-Ser-HPr). The two antagonistic activities of HprK/P are regulated by several intracellular metabolites, which change their concentration in response to the absence or presence of rapidly metabolisable carbon sources (glucose, fructose, etc.) in the growth medium. Therefore, by controlling the phosphorylation state of HPr, HPrK/P is a sensor enzyme that plays a major role in the regulation of carbon metabolism and sugar transport: it mediates carbon catabolite repression (CCR), and regulates PTS-catalyzed carbohydrate uptake and inducer exclusion. This Enterococcus faecalis (strain ATCC 700802 / V583) protein is HPr kinase/phosphorylase (hprK).